The primary structure comprises 450 residues: Probable glucoamylase (450 aa).

The first 16 residues, 1–16 (MRTYWLFLLLGGVVSA), serve as a signal peptide directing secretion. Residues 17-28 (ESLLSPNKRSKE) constitute a propeptide that is removed on maturation. Trp147 lines the substrate pocket. Catalysis depends on Asp203, which acts as the Proton acceptor. Glu206 acts as the Proton donor in catalysis. Residues Asn383 and Asn409 are each glycosylated (N-linked (GlcNAc...) asparagine).

It belongs to the glycosyl hydrolase 15 family.

It carries out the reaction Hydrolysis of terminal (1-&gt;4)-linked alpha-D-glucose residues successively from non-reducing ends of the chains with release of beta-D-glucose.. The protein is Probable glucoamylase (meu17) of Schizosaccharomyces pombe (strain 972 / ATCC 24843) (Fission yeast).